Consider the following 511-residue polypeptide: uncharacterized protein (511 aa).

One can recognise a LisH domain in the interval 13 to 45 (IYDALNMLVYDYLLKMKYEGSAKIFFNEAGLEN). The tract at residues 172–212 (PRFEEQGVPPAKMAPKQFRDEGRSGNVESPSIATNQEGSSP) is disordered. Residues 197–210 (NVESPSIATNQEGS) are compositionally biased toward polar residues.

This is an uncharacterized protein from Encephalitozoon cuniculi (strain GB-M1) (Microsporidian parasite).